The chain runs to 233 residues: Aquaglyceroporin AqpS (233 aa).

2 helical membrane passes run 11–31 (VAEA…GIMA) and 40–60 (LALV…VTIL). The NPA 1 motif lies at 69–71 (NPA). A run of 3 helical transmembrane segments spans residues 89-109 (AYVI…HLMF), 125-145 (AQWL…LAGI), and 152-172 (VPWL…STSF). Residues 174–176 (NPA) carry the NPA 2 motif. A helical transmembrane segment spans residues 193-213 (GDLPGFVIAELLGAVCALALM).

The protein belongs to the MIP/aquaporin (TC 1.A.8) family. NIP (TC 1.A.8.12) subfamily.

Its subcellular location is the cell inner membrane. Its function is as follows. Involved in resistance to arsenic. Facilitates efflux of arsenite [As(III)]. Arsenate [As(V)] enters the cell through phosphate transport systems and is reduced to arsenite by the arsenate reductase ArsC. Internally generated arsenite flows out of the cell by downhill movement through AqpS. Can also transport the highly toxic methylarsenite [MAs(III)] and the relatively non-toxic methylarsenate [MAs(V)]. May be a component of an methylarsenite resistance pathway in which methylarsenite enters cells via AqpS, is oxidized by ArsH to methylarsenate, which exits the cells via AqpS. This pathway may confer a selective advantage for R.melliloti to grow in the presence of environmental methylarsenicals. This is Aquaglyceroporin AqpS from Rhizobium meliloti (strain 1021) (Ensifer meliloti).